Consider the following 393-residue polypeptide: Cysteine desulfurase (393 aa).

Pyridoxal 5'-phosphate-binding positions include 76–77 (GT), Asn-155, Gln-183, and 203–205 (SAH). Position 206 is an N6-(pyridoxal phosphate)lysine (Lys-206). Thr-241 is a binding site for pyridoxal 5'-phosphate. Catalysis depends on Cys-328, which acts as the Cysteine persulfide intermediate. Cys-328 is a [2Fe-2S] cluster binding site.

This sequence belongs to the class-V pyridoxal-phosphate-dependent aminotransferase family. NifS/IscS subfamily. Homodimer. Requires pyridoxal 5'-phosphate as cofactor.

The catalysed reaction is (sulfur carrier)-H + L-cysteine = (sulfur carrier)-SH + L-alanine. Catalyzes the removal of elemental sulfur atoms from cysteine to produce alanine. Seems to participate in the biosynthesis of the nitrogenase metalloclusters by providing the inorganic sulfur required for the Fe-S core formation. The polypeptide is Cysteine desulfurase (Bradyrhizobium diazoefficiens (strain JCM 10833 / BCRC 13528 / IAM 13628 / NBRC 14792 / USDA 110)).